Reading from the N-terminus, the 200-residue chain is Large ribosomal subunit protein uL4 (200 aa).

The interval 38 to 68 is disordered; sequence GRQGSKQQKTRSDVRGGGKRPWRQKGTGRAR. The span at 54–65 shows a compositional bias: basic residues; that stretch reads GGKRPWRQKGTG.

The protein belongs to the universal ribosomal protein uL4 family. Part of the 50S ribosomal subunit.

Functionally, one of the primary rRNA binding proteins, this protein initially binds near the 5'-end of the 23S rRNA. It is important during the early stages of 50S assembly. It makes multiple contacts with different domains of the 23S rRNA in the assembled 50S subunit and ribosome. In terms of biological role, forms part of the polypeptide exit tunnel. The sequence is that of Large ribosomal subunit protein uL4 from Pseudomonas fluorescens (strain Pf0-1).